Here is a 132-residue protein sequence, read N- to C-terminus: UPF0299 membrane protein YohJ (132 aa).

Helical transmembrane passes span 7-27 (IIWQYIRAFVLIYACLYAGIF), 31-51 (LLPITIPGSIIGMLILFVLLA), 63-83 (GCYVLIRYMALLFVPIGVGVM), and 93-113 (FGPVVVSCAISTLVVFVVVSW).

The protein belongs to the UPF0299 family.

The protein localises to the cell inner membrane. This chain is UPF0299 membrane protein YohJ, found in Salmonella agona (strain SL483).